The chain runs to 257 residues: Ditrans,polycis-undecaprenyl-diphosphate synthase ((2E,6E)-farnesyl-diphosphate specific) (257 aa).

Asp-34 is an active-site residue. Mg(2+) is bound at residue Asp-34. Substrate contacts are provided by residues 35-38, Trp-39, Arg-47, and His-51; that span reads GNGR. Asn-82 (proton acceptor) is an active-site residue. Residues Trp-83, Arg-85, Arg-201, and 207 to 209 contribute to the substrate site; that span reads RLS. A Mg(2+)-binding site is contributed by Glu-220.

It belongs to the UPP synthase family. Homodimer. Requires Mg(2+) as cofactor.

The catalysed reaction is 8 isopentenyl diphosphate + (2E,6E)-farnesyl diphosphate = di-trans,octa-cis-undecaprenyl diphosphate + 8 diphosphate. Catalyzes the sequential condensation of isopentenyl diphosphate (IPP) with (2E,6E)-farnesyl diphosphate (E,E-FPP) to yield (2Z,6Z,10Z,14Z,18Z,22Z,26Z,30Z,34E,38E)-undecaprenyl diphosphate (di-trans,octa-cis-UPP). UPP is the precursor of glycosyl carrier lipid in the biosynthesis of bacterial cell wall polysaccharide components such as peptidoglycan and lipopolysaccharide. The polypeptide is Ditrans,polycis-undecaprenyl-diphosphate synthase ((2E,6E)-farnesyl-diphosphate specific) (Francisella tularensis subsp. tularensis (strain SCHU S4 / Schu 4)).